The chain runs to 454 residues: F-box/WD-40 repeat-containing protein At3g52030 (454 aa).

The 47-residue stretch at 20–66 folds into the F-box domain; the sequence is PTSIESLDADILCIIFSFLDLFDLVHCTVVCNSWNAVIKRLKLLQAS. 8 WD repeats span residues 85–116, 117–153, 170–214, 215–255, 258–296, 301–340, 343–383, and 422–454; these read DRPA…RWEA, HSHR…CMEE, SKKL…SIFP, SRAG…CSQI, TQGG…PVAT, ITAG…RLWE, VSPN…VLSR, and KVRP…FNLS.

This Arabidopsis thaliana (Mouse-ear cress) protein is F-box/WD-40 repeat-containing protein At3g52030.